Here is a 405-residue protein sequence, read N- to C-terminus: MNISSAQFIPGVHTVEEIEAEIHKNLHISKSCSYQKVPNSHKEFTKFCYEVYNEIKISDKEFKEKRAALDTLRLCLKRISPDAELVAFGSLESGLALKNSDMDLCVLMDSRVQSDTIALQFYEELIAEGFEGKFLQRARIPIIKLTSDTKNGFGASFQCDIGFNNRLAIHNTLLLSSYTKLDARLKPMVLLVKHWAKRKQINSPYFGTLSSYGYVLMVLYYLIHVIKPPVFPNLLLSPLKQEKIVDGFDVGFDDKLEDIPPSQNYSSLGSLLHGFFRFYAYKFEPREKVVTFRRPDGYLTKQEKGWTSATEHTGSADQIIKDRYILAIEDPFEISHNVGRTVSSSGLYRIRGEFMAASRLLNSRSYPIPYDSLFEEAPIPPRRQKKTDEQSNKKLLNETDGDNSE.

Ser-90 lines the UTP pocket. Residues Asp-101 and Asp-103 each contribute to the Mg(2+) site. Residues Ala-168, Asn-171, Thr-172, Lys-193, Lys-197, Ser-211, Tyr-212, and His-336 each contribute to the UTP site. Residues 267 to 336 form the PAP-associated domain; it reads SLGSLLHGFF…AIEDPFEISH (70 aa). Position 340 (Arg-340) interacts with ATP. Positions 377–405 are disordered; that stretch reads APIPPRRQKKTDEQSNKKLLNETDGDNSE. The segment covering 386-397 has biased composition (basic and acidic residues); it reads KTDEQSNKKLLN.

This sequence belongs to the DNA polymerase type-B-like family. Mg(2+) is required as a cofactor. The cofactor is Mn(2+).

It is found in the cytoplasm. It carries out the reaction RNA(n) + UTP = RNA(n)-3'-uridine ribonucleotide + diphosphate. It catalyses the reaction RNA(n) + ATP = RNA(n)-3'-adenine ribonucleotide + diphosphate. Its function is as follows. Cytoplasmic uridylyltransferase that mediates the terminal uridylation of mRNAs with short poly(A) tails such as such as act1, hcn1 and urg1 mRNAs, hence facilitating global mRNA decay. Uridylates the 3' ends of actin mRNAs upon S-phase arrest. Also has a weak poly(A) polymerase (PAP) activity. Residue His-336 is responsible for the specificity for UTP. Involved in cell cycle arrest where in association with crb2/rhp9 and chk1 it inhibits unscheduled mitosis. This Schizosaccharomyces pombe (strain 972 / ATCC 24843) (Fission yeast) protein is Terminal uridylyltransferase cid1.